A 57-amino-acid polypeptide reads, in one-letter code: Small ribosomal subunit protein eS31 (57 aa).

Residues Cys29, Cys32, Cys47, and Cys50 each contribute to the Zn(2+) site. A C4-type zinc finger spans residues 29–50 (CSRCGKGTYMSEHKDRNTCGKC).

It belongs to the eukaryotic ribosomal protein eS31 family. In terms of assembly, part of the 30S ribosomal subunit. It depends on Zn(2+) as a cofactor.

The chain is Small ribosomal subunit protein eS31 from Nitrosopumilus maritimus (strain SCM1).